Reading from the N-terminus, the 1488-residue chain is Chromosome partition protein MukB (1488 aa).

ATP is bound at residue 34-41 (GGNGAGKS). 3 coiled-coil regions span residues 326-418 (LEAD…QYNQ), 444-472 (LDTFQAKEQEATEKLLSLEQKMSVAQTAH), and 509-602 (RHLA…QRAP). The segment at 666–783 (PGGAEDQRLN…SLPIFGRAAR (118 aa)) is flexible hinge. Coiled coils occupy residues 835 to 923 (EAEI…AKLE), 977 to 1116 (EMLS…AKAG), and 1209 to 1265 (VEAI…LQSV). The segment at 1049–1074 (ADSGAEERARQRRDELHAQLSNNRSR) is disordered. The segment covering 1051–1065 (SGAEERARQRRDELH) has biased composition (basic and acidic residues).

It belongs to the SMC family. MukB subfamily. In terms of assembly, homodimerization via its hinge domain. Binds to DNA via its C-terminal region. Interacts, and probably forms a ternary complex, with MukE and MukF via its C-terminal region. The complex formation is stimulated by calcium or magnesium. Interacts with tubulin-related protein FtsZ.

It localises to the cytoplasm. Its subcellular location is the nucleoid. Functionally, plays a central role in chromosome condensation, segregation and cell cycle progression. Functions as a homodimer, which is essential for chromosome partition. Involved in negative DNA supercoiling in vivo, and by this means organize and compact chromosomes. May achieve or facilitate chromosome segregation by condensation DNA from both sides of a centrally located replisome during cell division. The protein is Chromosome partition protein MukB of Salmonella paratyphi A (strain ATCC 9150 / SARB42).